Reading from the N-terminus, the 325-residue chain is Phosphatidylglycerol--prolipoprotein diacylglyceryl transferase (325 aa).

Helical transmembrane passes span 19-39, 47-67, 93-113, and 119-139; these read IPLR…VWFG, GGKA…GLVG, IWEG…GAWI, and GIPL…AQAI. Arginine 141 contacts a 1,2-diacyl-sn-glycero-3-phospho-(1'-sn-glycerol). The next 3 membrane-spanning stretches (helical) occupy residues 175–195, 207–225, and 237–257; these read HPTF…VIWA, FALY…EYMR, and LNVW…VISA. Basic and acidic residues predominate over residues 266-312; it reads IVEPDRDATPAEKDGSGEDGSGEKGVAKADAAAKDPLTKDEPGKDAT. Residues 266-325 form a disordered region; that stretch reads IVEPDRDATPAEKDGSGEDGSGEKGVAKADAAAKDPLTKDEPGKDATAENAGAAGAAEKA. Over residues 313–325 the composition is skewed to low complexity; sequence AENAGAAGAAEKA.

It belongs to the Lgt family.

Its subcellular location is the cell membrane. It carries out the reaction L-cysteinyl-[prolipoprotein] + a 1,2-diacyl-sn-glycero-3-phospho-(1'-sn-glycerol) = an S-1,2-diacyl-sn-glyceryl-L-cysteinyl-[prolipoprotein] + sn-glycerol 1-phosphate + H(+). It functions in the pathway protein modification; lipoprotein biosynthesis (diacylglyceryl transfer). Its function is as follows. Catalyzes the transfer of the diacylglyceryl group from phosphatidylglycerol to the sulfhydryl group of the N-terminal cysteine of a prolipoprotein, the first step in the formation of mature lipoproteins. The polypeptide is Phosphatidylglycerol--prolipoprotein diacylglyceryl transferase (Streptomyces griseus subsp. griseus (strain JCM 4626 / CBS 651.72 / NBRC 13350 / KCC S-0626 / ISP 5235)).